Consider the following 1290-residue polypeptide: Alpha-factor-transporting ATPase (1290 aa).

At 1-25 (MNFLSFKTTKHYHIFRYVNIRNDYR) the chain is on the cytoplasmic side. The chain crosses the membrane as a helical span at residues 26-46 (LLMIMIIGTVATGLVPAITSI). The 293-residue stretch at 27 to 319 (LMIMIIGTVA…TLHQIVVLQK (293 aa)) folds into the ABC transmembrane type-1 1 domain. Residues 47–75 (LTGRVFDLLSVFVANGSHQGLYSQLVQRS) lie on the Extracellular side of the membrane. A glycan (N-linked (GlcNAc...) asparagine) is linked at Asn61. The chain crosses the membrane as a helical span at residues 76–96 (MAVMALGAASVPVMWLSLTSW). The Cytoplasmic portion of the chain corresponds to 97–150 (MHIGERQGFRIRSQILEAYLEEKPMEWYDNNEKLLGDFTQINRCVEELRSSSAE). Residues 151–171 (ASAITFQNLVAICALLGTSFY) form a helical membrane-spanning segment. The Extracellular portion of the chain corresponds to 172–173 (YS). Residues 174-194 (WSLTLIILCSSPIITFFAVVF) traverse the membrane as a helical segment. Topologically, residues 195-262 (SRMIHVYSEK…SCFFVAANAG (68 aa)) are cytoplasmic. A helical transmembrane segment spans residues 263–283 (ILRFLTLTMFVQGFWFGSAMI). The Extracellular portion of the chain corresponds to 284 to 296 (KKGKLNINDVITC). The helical transmembrane segment at 297-317 (FHSCIMLGSTLNNTLHQIVVL) threads the bilayer. Residues 318-715 (QKGGVAMEKI…RMIKSIRYKK (398 aa)) are Cytoplasmic-facing. The 247-residue stretch at 357–603 (LTFANVSFSY…PTTTFSTWYH (247 aa)) folds into the ABC transporter 1 domain. 392-399 (GKSGSGKS) lines the ATP pocket. Residues 716–736 (ILILGLLCSLIAGATNPVFSY) form a helical membrane-spanning segment. Residues 717–1007 (LILGLLCSLI…LVSQIPDISR (291 aa)) form the ABC transmembrane type-1 2 domain. The Extracellular segment spans residues 737 to 763 (TFSFLLEGIVPSTDGKTGSSHYLAKWS). A helical membrane pass occupies residues 764-784 (LLVLGVAAADGIFNFAKGFLL). Over 785–838 (DCCSEYWVMDLRNEVMEKLTRKNMDWFSGENNKASEISALVLNDLRDLRSLVSE) the chain is Cytoplasmic. The chain crosses the membrane as a helical span at residues 839–859 (FLSAMTSFVTVSTIGLIWALV). The Extracellular segment spans residues 860–865 (SGWKLS). A helical membrane pass occupies residues 866 to 886 (LVCISMFPLIIIFSAIYGGIL). Residues 887 to 945 (QKCETDYKTSVAQLENCLYQIVTNIKTIKCLQAEFHFQLTYHDLKIKMQQIASKRAIAT) lie on the Cytoplasmic side of the membrane. Residues 946–966 (GFGISMTNMIVMCIQAIIYYY) traverse the membrane as a helical segment. Topologically, residues 967-981 (GLKLVMIHEYTSKEM) are extracellular. Residues 982 to 1002 (FTTFTLLLFTIMSCTSLVSQI) traverse the membrane as a helical segment. The Cytoplasmic portion of the chain corresponds to 1003–1290 (PDISRGQRAA…LFQIVSNQSS (288 aa)). Residue Lys1022 forms a Glycyl lysine isopeptide (Lys-Gly) (interchain with G-Cter in ubiquitin) linkage. One can recognise an ABC transporter 2 domain in the interval 1052–1287 (VSIQNLTFAY…RGELFQIVSN (236 aa)). 1087–1094 (GESGTGKS) contributes to the ATP binding site.

Belongs to the ABC transporter superfamily. Alpha-factor sex pheromone exporter (TC 3.A.1.206) family. Post-translationally, degraded via the ubiquitin system.

It is found in the membrane. It carries out the reaction an [alpha-factor](in) + ATP + H2O = an [alpha-factor](out) + ADP + phosphate + H(+). In terms of biological role, STE6 is required in yeast MATA cells for production of A-factor pheromone. STE6 is involved in the transport of the farnesyl-derivation of the A-factor pheromone. This is Alpha-factor-transporting ATPase (STE6) from Saccharomyces cerevisiae (strain ATCC 204508 / S288c) (Baker's yeast).